The primary structure comprises 883 residues: Alanine--tRNA ligase (883 aa).

4 residues coordinate Zn(2+): H560, H564, C665, and H669.

Belongs to the class-II aminoacyl-tRNA synthetase family. Requires Zn(2+) as cofactor.

It is found in the cytoplasm. The enzyme catalyses tRNA(Ala) + L-alanine + ATP = L-alanyl-tRNA(Ala) + AMP + diphosphate. Functionally, catalyzes the attachment of alanine to tRNA(Ala) in a two-step reaction: alanine is first activated by ATP to form Ala-AMP and then transferred to the acceptor end of tRNA(Ala). Also edits incorrectly charged Ser-tRNA(Ala) and Gly-tRNA(Ala) via its editing domain. The protein is Alanine--tRNA ligase of Mesomycoplasma hyopneumoniae (strain 232) (Mycoplasma hyopneumoniae).